The following is a 213-amino-acid chain: Small ribosomal subunit protein uS4 (213 aa).

A disordered region spans residues 16-53 (GTDLGLKSGVKPYDVKTKKSARPPGQHGVSRNKSSEYS). The span at 44-53 (VSRNKSSEYS) shows a compositional bias: polar residues. Positions 97–163 (SRLDNVVYRM…EKSREQLRIK (67 aa)) constitute an S4 RNA-binding domain.

Belongs to the universal ribosomal protein uS4 family. In terms of assembly, part of the 30S ribosomal subunit. Contacts protein S5. The interaction surface between S4 and S5 is involved in control of translational fidelity.

One of the primary rRNA binding proteins, it binds directly to 16S rRNA where it nucleates assembly of the body of the 30S subunit. In terms of biological role, with S5 and S12 plays an important role in translational accuracy. The polypeptide is Small ribosomal subunit protein uS4 (Psychrobacter arcticus (strain DSM 17307 / VKM B-2377 / 273-4)).